We begin with the raw amino-acid sequence, 196 residues long: dCTP deaminase, dUMP-forming (196 aa).

Residues 101 to 106 (KSSLGR), Asp-119, 127 to 129 (TLE), Gln-148, Tyr-162, and Gln-174 each bind dCTP. Glu-129 functions as the Proton donor/acceptor in the catalytic mechanism.

The protein belongs to the dCTP deaminase family. In terms of assembly, homotrimer.

It catalyses the reaction dCTP + 2 H2O = dUMP + NH4(+) + diphosphate. Its pathway is pyrimidine metabolism; dUMP biosynthesis; dUMP from dCTP: step 1/1. Bifunctional enzyme that catalyzes both the deamination of dCTP to dUTP and the hydrolysis of dUTP to dUMP without releasing the toxic dUTP intermediate. This chain is dCTP deaminase, dUMP-forming, found in Tropheryma whipplei (strain TW08/27) (Whipple's bacillus).